The chain runs to 392 residues: Phosphopentomutase (392 aa).

The Mn(2+) site is built by D13, D286, H291, D327, H328, and H339.

Belongs to the phosphopentomutase family. It depends on Mn(2+) as a cofactor.

The protein resides in the cytoplasm. It carries out the reaction 2-deoxy-alpha-D-ribose 1-phosphate = 2-deoxy-D-ribose 5-phosphate. The catalysed reaction is alpha-D-ribose 1-phosphate = D-ribose 5-phosphate. It participates in carbohydrate degradation; 2-deoxy-D-ribose 1-phosphate degradation; D-glyceraldehyde 3-phosphate and acetaldehyde from 2-deoxy-alpha-D-ribose 1-phosphate: step 1/2. In terms of biological role, isomerase that catalyzes the conversion of deoxy-ribose 1-phosphate (dRib-1-P) and ribose 1-phosphate (Rib-1-P) to deoxy-ribose 5-phosphate (dRib-5-P) and ribose 5-phosphate (Rib-5-P), respectively. This is Phosphopentomutase from Oceanobacillus iheyensis (strain DSM 14371 / CIP 107618 / JCM 11309 / KCTC 3954 / HTE831).